The primary structure comprises 339 residues: Anthranilate phosphoribosyltransferase (339 aa).

5-phospho-alpha-D-ribose 1-diphosphate-binding positions include Gly-80, 83–84, Thr-88, 90–93, 108–116, and Ser-120; these read GD, NIST, and KHGNRAMSS. Gly-80 provides a ligand contact to anthranilate. Residue Ser-92 participates in Mg(2+) binding. Asn-111 is an anthranilate binding site. Arg-166 contributes to the anthranilate binding site. Mg(2+) is bound by residues Asp-225 and Glu-226.

The protein belongs to the anthranilate phosphoribosyltransferase family. Homodimer. Mg(2+) serves as cofactor.

It catalyses the reaction N-(5-phospho-beta-D-ribosyl)anthranilate + diphosphate = 5-phospho-alpha-D-ribose 1-diphosphate + anthranilate. It functions in the pathway amino-acid biosynthesis; L-tryptophan biosynthesis; L-tryptophan from chorismate: step 2/5. Its function is as follows. Catalyzes the transfer of the phosphoribosyl group of 5-phosphorylribose-1-pyrophosphate (PRPP) to anthranilate to yield N-(5'-phosphoribosyl)-anthranilate (PRA). This Chloroflexus aurantiacus (strain ATCC 29366 / DSM 635 / J-10-fl) protein is Anthranilate phosphoribosyltransferase.